Here is a 255-residue protein sequence, read N- to C-terminus: Kallikrein-15 (255 aa).

An N-terminal signal peptide occupies residues 1 to 15; it reads MWLLLPLSFLLTSTA. The propeptide at 16–20 is activation peptide; sequence QDGGK. A serine protease region spans residues 21–253; it reads LLEGEECAPH…YVKWIRETMK (233 aa). Cysteines 46 and 62 form a disulfide. Catalysis depends on charge relay system residues histidine 61 and aspartate 105. 3 cysteine pairs are disulfide-bonded: cysteine 137-cysteine 214, cysteine 179-cysteine 193, and cysteine 204-cysteine 229. Residue asparagine 170 is glycosylated (N-linked (GlcNAc...) asparagine). Catalysis depends on serine 208, which acts as the Charge relay system. A glycan (N-linked (GlcNAc...) asparagine) is linked at asparagine 231.

Belongs to the peptidase S1 family. Kallikrein subfamily.

Its subcellular location is the secreted. Its function is as follows. Protease whose physiological substrate is not yet known. This Saguinus oedipus (Cotton-top tamarin) protein is Kallikrein-15 (KLK15).